The chain runs to 77 residues: U-actitoxin-Avd12a (77 aa).

An N-terminal signal peptide occupies residues 1 to 23 (MALFRMLFLCAVLVLLTSKEGMS). A propeptide spanning residues 24-29 (YEEPEN) is cleaved from the precursor. An EGF-like domain is found at 31-73 (EGVACTGQYAESFCLNGGTCRYIQSIGEYYCICNGDYTGHRCE). Disulfide bonds link Cys-35–Cys-50, Cys-44–Cys-61, and Cys-63–Cys-72.

This sequence belongs to the EGF domain peptide family.

The protein localises to the secreted. Its subcellular location is the nematocyst. Has both toxic and EGF activity. Its EGF activity consists of rounding cells (morphological change) and inducing tyrosine phosphorylation of the EGFR in A431 cells, but with a lower potency that human EGF. This is U-actitoxin-Avd12a from Anemonia viridis (Snakelocks anemone).